The following is a 905-amino-acid chain: MVSLGVFARKFFGSAYERRLKVLRQKVAQINALEEQFVKLSDEQLCQKTDAFRKRLSEGENVDSLLPEAFATVREAAKRVYDMRPFDVQLIGGMVLHDCGIAEMRTGEGKTLMATLPIYLNALEGKGVHVVTVNDYLASRDAETMGKIFSFLGMTTGVILHDLDSDARRAAYACDITYATNNELGFDYLRDNMAFDRSQMVQRGHHYAIVDEVDSILIDEARTPLIISGPLEDRTDFYNLIDTFIPALIPEDYEIDEKQKTTTFTEVGTEKIEKMLEQAGYLKGESLYDIENVAIVHHVNNALKAHKLFVRDKDYIVRNDEIVIIDEFTGRMMPGRRYSEGLHQALEAKEHVAIQPENQTLASITFQNYFRMYRKLSGMTGTAATEAEEFRNIYGLDVVEVPTNLPVQRLDEDDEIYRTAEEKYRAIVRDIRQAHEKKQPILVGTTSIEKSEQLAERLRKEGITDFKVLNARYHEQEAYIIAQAGVPGALTIATNMAGRGTDIQLGGNVEMRIRQELQDIPEGPERTAKIEEIKKDVKQLKEKALAAGGLYVIATERHESRRIDNQLRGRSGRQGDPGRSKFFLSLQDDLMRIFGSNRMDGMLQKLGLKENEAIIHPWINKALEKAQKKVEARNFEIRKNLLKYDDVMNDQRKVIFEQRMEVMNADDLSEMIHEMRNDVVEDLVETYIPSGTYSEKWDVKALEEELQQLFNLELPVKEWAKEDGIAEEQILERILDAVTKLEDERTERYSPEVMAYFQKAVLLETIDTLWRENLVSLDHLRSVVGFRGYAQRDPLNEYKTESFELFQSMLKNLRRIVTSKLMRFEIIQQPTEPSMPEQTGADSSVFNDQNQENAPPLWARSQENRFVNPQDRDPNDVTTWGKVGRNERCPCGSEKKYKHCHGAFV.

Residues Q89, 107 to 111, and D502 contribute to the ATP site; that span reads GEGKT. Zn(2+) contacts are provided by C889, C891, C900, and H901.

This sequence belongs to the SecA family. As to quaternary structure, monomer and homodimer. Part of the essential Sec protein translocation apparatus which comprises SecA, SecYEG and auxiliary proteins SecDF-YajC and YidC. Requires Zn(2+) as cofactor.

The protein localises to the cell inner membrane. It localises to the cytoplasm. The catalysed reaction is ATP + H2O + cellular proteinSide 1 = ADP + phosphate + cellular proteinSide 2.. Functionally, part of the Sec protein translocase complex. Interacts with the SecYEG preprotein conducting channel. Has a central role in coupling the hydrolysis of ATP to the transfer of proteins into and across the cell membrane, serving both as a receptor for the preprotein-SecB complex and as an ATP-driven molecular motor driving the stepwise translocation of polypeptide chains across the membrane. This is Protein translocase subunit SecA from Bartonella tribocorum (strain CIP 105476 / IBS 506).